The primary structure comprises 401 residues: Chalcone synthase 3 (401 aa).

C168 is a catalytic residue.

It belongs to the thiolase-like superfamily. Chalcone/stilbene synthases family.

The catalysed reaction is (E)-4-coumaroyl-CoA + 3 malonyl-CoA + 3 H(+) = 2',4,4',6'-tetrahydroxychalcone + 3 CO2 + 4 CoA. It functions in the pathway secondary metabolite biosynthesis; flavonoid biosynthesis. In terms of biological role, the primary product of this enzyme is 4,2',4',6'-tetrahydroxychalcone (also termed naringenin-chalcone or chalcone) which can under specific conditions spontaneously isomerize into naringenin. The polypeptide is Chalcone synthase 3 (CHS3) (Sorghum bicolor (Sorghum)).